We begin with the raw amino-acid sequence, 128 residues long: Large ribosomal subunit protein bL12 (128 aa).

It belongs to the bacterial ribosomal protein bL12 family. Homodimer. Part of the ribosomal stalk of the 50S ribosomal subunit. Forms a multimeric L10(L12)X complex, where L10 forms an elongated spine to which 2 to 4 L12 dimers bind in a sequential fashion. Binds GTP-bound translation factors.

In terms of biological role, forms part of the ribosomal stalk which helps the ribosome interact with GTP-bound translation factors. Is thus essential for accurate translation. This chain is Large ribosomal subunit protein bL12, found in Trichormus variabilis (strain ATCC 29413 / PCC 7937) (Anabaena variabilis).